The primary structure comprises 206 residues: uncharacterized protein (206 aa).

Residues 21-43 form a helical membrane-spanning segment; the sequence is VPINITMSICALTALLKSYSITG.

It is found in the membrane. This is an uncharacterized protein from Acanthamoeba polyphaga (Amoeba).